Consider the following 281-residue polypeptide: Thioesterase PikA5 (281 aa).

The thioesterase stretch occupies residues 26-249 (RLVCLPHAGG…WHEICNDISD (224 aa)). The Nucleophile; for thioesterase activity role is filled by Ser-99. The Proton acceptor; for thioesterase activity role is filled by His-233.

Belongs to the thioesterase family.

It functions in the pathway antibiotic biosynthesis. In terms of biological role, involved in the biosynthesis of 12- and 14-membered ring macrolactone antibiotics such as methymycin, neomethymycin, narbomycin and pikromycin. Responsible for removing mis-formed acyl moieties (aberrant decarboxylation) that are bound to the PKS and could block it. Catalyzes the cleavage of methylmalonyl-[acp]. It exhibits some acyl-group specificity, and catalyzes the cleavage of propionyl and butyryl derivatives faster than acetyl malonyl or methylmalonyl derivatives. The protein is Thioesterase PikA5 of Streptomyces venezuelae.